The following is a 608-amino-acid chain: MECPEPSESVIPNDQSTKSCSIKLQPMNRFRDMSKLRNYEIIQKLGQGTFGVVQKARNIKTKELVALKQLINHSAKEGFPITAMREITILKKLNHKNILKIIDMIYEEPKISNPQDILHQRGCFYTVSPYMCSDLVGLLENPNINLEVSHIKCFMEQLLHGIQYIHEQMFLHRDIKAANILIDRNGTLKIADFGLARVYHGSPPKFMSGPGGGERAYTGLVVTRWYRPPELLLGERRYTTAVDMWGIGCVFGELFTRKPILVGKTDSHQAQLIFDLVGPPNSISWSEATSLPNKHDLNIGLTCQRSLESKFAPLMNPDGINLLSGLLTLDPYKRFNALDALNHNYFKNEPLPMKPQELPKFEECHEIDKERFKLLREKKNNIHEANKIPKAHFPKGPGEYNNSNNYPRNRNGSFPLALPKQPKFYNQHQQEAHVPQQMHTDTYIPKKRDDKPGANAPQKESSEPITSYQSLRDRSPRREGHISRKPSTTNSNNISSNSSASNVGGTLSNPTHQKNRPNAKASAGIFMTNSRKQRPKPNPQSSSRNVSDQFKKRKLLPDEQNESDLTDFDEDVKDSKQLDSFLDWDTFTRSPENRKLQHEKKQFETKYS.

The Protein kinase domain occupies 39 to 346 (YEIIQKLGQG…ALDALNHNYF (308 aa)). ATP contacts are provided by residues 45–53 (LGQGTFGVV) and K68. The Proton acceptor role is filled by D174. 2 disordered regions span residues 383–419 (HEANKIPKAHFPKGPGEYNNSNNYPRNRNGSFPLALP) and 443–571 (YIPK…FDED). Residues 400-411 (YNNSNNYPRNRN) are compositionally biased toward low complexity. The segment covering 471-482 (LRDRSPRREGHI) has biased composition (basic and acidic residues). The span at 487–502 (STTNSNNISSNSSASN) shows a compositional bias: low complexity. Composition is skewed to polar residues over residues 503-512 (VGGTLSNPTH) and 539-548 (PQSSSRNVSD). Acidic residues predominate over residues 559-571 (EQNESDLTDFDED).

The protein belongs to the protein kinase superfamily. CMGC Ser/Thr protein kinase family. CDC2/CDKX subfamily.

It localises to the nucleus. The catalysed reaction is L-seryl-[protein] + ATP = O-phospho-L-seryl-[protein] + ADP + H(+). It carries out the reaction L-threonyl-[protein] + ATP = O-phospho-L-threonyl-[protein] + ADP + H(+). The enzyme catalyses [DNA-directed RNA polymerase] + ATP = phospho-[DNA-directed RNA polymerase] + ADP + H(+). Functionally, serine/threonine-protein kinase involved in transcription regulation. Phosphorylates the UBC2/RAD6 ubiquitin-conjugating enzyme (E2), leading to monoubiquitination of histone H2B and the silencing of telomeric-associated genes. Also required for histone H3 methylation. Necessary for the recovery from pheromone-induced growth arrest in the cell cycle G1 phase. In Debaryomyces hansenii (strain ATCC 36239 / CBS 767 / BCRC 21394 / JCM 1990 / NBRC 0083 / IGC 2968) (Yeast), this protein is Serine/threonine-protein kinase BUR1 (BUR1).